The primary structure comprises 86 residues: Large ribosomal subunit protein bL27c (86 aa).

Positions 1 to 27 (MAHKKGSGSTRNGRDSNSKRLGVKKYG) are disordered.

The protein belongs to the bacterial ribosomal protein bL27 family.

The protein resides in the plastid. It localises to the chloroplast. The chain is Large ribosomal subunit protein bL27c from Pyropia yezoensis (Susabi-nori).